A 301-amino-acid polypeptide reads, in one-letter code: Protein KTI12 homolog (301 aa).

8–15 (GQPCSGKS) contacts ATP. The segment at 262 to 275 (LRRTFIKLAGQYSL) is calmodulin-binding.

It belongs to the KTI12 family. In terms of assembly, interacts with the elongator complex. Binds to calmodulin in a calcium-dependent manner.

Its subcellular location is the cytoplasm. The protein resides in the nucleus. Functionally, elongator complex-associated factor that is not a structural subunit but rather transiently contacts the complex. Regulates both meristem activity and organ growth; acts as a positive regulator of adaxial leaf patterning. Required for an early step in synthesis of 5-carbamoylmethyl (ncm5) groups present on uridines (ncm5U) at the wobble position in tRNA. This chain is Protein KTI12 homolog, found in Oryza sativa subsp. indica (Rice).